A 189-amino-acid polypeptide reads, in one-letter code: Peptidyl-tRNA hydrolase (189 aa).

Y14 contributes to the tRNA binding site. Catalysis depends on H19, which acts as the Proton acceptor. TRNA-binding residues include Y64, N66, and N112.

It belongs to the PTH family. In terms of assembly, monomer.

The protein resides in the cytoplasm. The enzyme catalyses an N-acyl-L-alpha-aminoacyl-tRNA + H2O = an N-acyl-L-amino acid + a tRNA + H(+). Its function is as follows. Hydrolyzes ribosome-free peptidyl-tRNAs (with 1 or more amino acids incorporated), which drop off the ribosome during protein synthesis, or as a result of ribosome stalling. In terms of biological role, catalyzes the release of premature peptidyl moieties from peptidyl-tRNA molecules trapped in stalled 50S ribosomal subunits, and thus maintains levels of free tRNAs and 50S ribosomes. The chain is Peptidyl-tRNA hydrolase from Dehalococcoides mccartyi (strain ATCC BAA-2100 / JCM 16839 / KCTC 5957 / BAV1).